The following is a 624-amino-acid chain: Chaperone protein HtpG (624 aa).

Residues Met1 to Arg336 form an a; substrate-binding region. The interval Glu337–Lys552 is b. Residues Leu553–Ala624 are c.

This sequence belongs to the heat shock protein 90 family. Homodimer.

It localises to the cytoplasm. Its function is as follows. Molecular chaperone. Has ATPase activity. This chain is Chaperone protein HtpG, found in Yersinia pestis bv. Antiqua (strain Antiqua).